We begin with the raw amino-acid sequence, 149 residues long: Succinate dehydrogenase assembly factor 2, mitochondrial (149 aa).

It belongs to the SDHAF2 family. As to quaternary structure, interacts with the flavoprotein subunit within the SDH catalytic dimer.

It is found in the mitochondrion matrix. Its function is as follows. Plays an essential role in the assembly of succinate dehydrogenase (SDH), an enzyme complex (also referred to as respiratory complex II) that is a component of both the tricarboxylic acid (TCA) cycle and the mitochondrial electron transport chain, and which couples the oxidation of succinate to fumarate with the reduction of ubiquinone (coenzyme Q) to ubiquinol. Required for flavinylation (covalent attachment of FAD) of the flavoprotein subunit of the SDH catalytic dimer. The protein is Succinate dehydrogenase assembly factor 2, mitochondrial of Scheffersomyces stipitis (strain ATCC 58785 / CBS 6054 / NBRC 10063 / NRRL Y-11545) (Yeast).